Here is a 162-residue protein sequence, read N- to C-terminus: Nucleotide-binding protein SCO4614 (162 aa).

The protein belongs to the YajQ family.

The protein resides in the cytoplasm. It is found in the nucleoid. Functionally, nucleotide-binding protein. This is Nucleotide-binding protein SCO4614 from Streptomyces coelicolor (strain ATCC BAA-471 / A3(2) / M145).